Reading from the N-terminus, the 457-residue chain is Adenylosuccinate synthetase isozyme 2 (457 aa).

GTP contacts are provided by residues 40 to 46 (GDEGKGK) and 68 to 70 (GHT). Catalysis depends on Asp41, which acts as the Proton acceptor. Mg(2+) is bound by residues Asp41 and Gly68. Asp41 serves as a coordination point for substrate. IMP is bound by residues 41–44 (DEGK), 66–69 (NAGH), Thr163, Arg177, Asn256, Thr271, and Arg335. The active-site Proton donor is the His69. A substrate-binding site is contributed by 331-337 (VTTGRKR). GTP-binding positions include Arg337, 363-365 (KLD), and 445-448 (GVGK).

This sequence belongs to the adenylosuccinate synthetase family. In terms of assembly, homodimer. It depends on Mg(2+) as a cofactor.

Its subcellular location is the cytoplasm. The protein resides in the mitochondrion. The enzyme catalyses IMP + L-aspartate + GTP = N(6)-(1,2-dicarboxyethyl)-AMP + GDP + phosphate + 2 H(+). The protein operates within purine metabolism; AMP biosynthesis via de novo pathway; AMP from IMP: step 1/2. Its activity is regulated as follows. Inhibited competitively by AMP and IMP and non-competitively by fructose 1,6-bisphosphate. Plays an important role in the de novo pathway and in the salvage pathway of purine nucleotide biosynthesis. Catalyzes the first committed step in the biosynthesis of AMP from IMP. This is Adenylosuccinate synthetase isozyme 2 (adss2) from Xenopus laevis (African clawed frog).